The chain runs to 27 residues: Allergen C-C (27 aa).

The protein belongs to the protease inhibitor I6 (cereal trypsin/alpha-amylase inhibitor) family.

The protein resides in the secreted. The sequence is that of Allergen C-C from Triticum aestivum (Wheat).